Here is a 162-residue protein sequence, read N- to C-terminus: NADH-quinone oxidoreductase subunit I (162 aa).

2 consecutive 4Fe-4S ferredoxin-type domains span residues 53–83 and 93–122; these read LRRY…IDSA and TRYD…ETHI. Positions 63, 66, 69, 73, 102, 105, 108, and 112 each coordinate [4Fe-4S] cluster.

It belongs to the complex I 23 kDa subunit family. As to quaternary structure, NDH-1 is composed of 14 different subunits. Subunits NuoA, H, J, K, L, M, N constitute the membrane sector of the complex. [4Fe-4S] cluster serves as cofactor.

The protein resides in the cell inner membrane. It carries out the reaction a quinone + NADH + 5 H(+)(in) = a quinol + NAD(+) + 4 H(+)(out). Its function is as follows. NDH-1 shuttles electrons from NADH, via FMN and iron-sulfur (Fe-S) centers, to quinones in the respiratory chain. The immediate electron acceptor for the enzyme in this species is believed to be ubiquinone. Couples the redox reaction to proton translocation (for every two electrons transferred, four hydrogen ions are translocated across the cytoplasmic membrane), and thus conserves the redox energy in a proton gradient. This chain is NADH-quinone oxidoreductase subunit I, found in Xanthomonas axonopodis pv. citri (strain 306).